An 85-amino-acid chain; its full sequence is Cell division topological specificity factor (85 aa).

The protein belongs to the MinE family.

Functionally, prevents the cell division inhibition by proteins MinC and MinD at internal division sites while permitting inhibition at polar sites. This ensures cell division at the proper site by restricting the formation of a division septum at the midpoint of the long axis of the cell. This Chromobacterium violaceum (strain ATCC 12472 / DSM 30191 / JCM 1249 / CCUG 213 / NBRC 12614 / NCIMB 9131 / NCTC 9757 / MK) protein is Cell division topological specificity factor.